The following is a 158-amino-acid chain: 6,7-dimethyl-8-ribityllumazine synthase (158 aa).

5-amino-6-(D-ribitylamino)uracil-binding positions include Phe-24, Ala-58–Glu-60, and Ala-82–Ile-84. Gly-87 to Thr-88 provides a ligand contact to (2S)-2-hydroxy-3-oxobutyl phosphate. His-90 acts as the Proton donor in catalysis. Phe-115 is a 5-amino-6-(D-ribitylamino)uracil binding site. Arg-129 provides a ligand contact to (2S)-2-hydroxy-3-oxobutyl phosphate.

This sequence belongs to the DMRL synthase family. In terms of assembly, forms an icosahedral capsid composed of 60 subunits, arranged as a dodecamer of pentamers.

It catalyses the reaction (2S)-2-hydroxy-3-oxobutyl phosphate + 5-amino-6-(D-ribitylamino)uracil = 6,7-dimethyl-8-(1-D-ribityl)lumazine + phosphate + 2 H2O + H(+). Its pathway is cofactor biosynthesis; riboflavin biosynthesis; riboflavin from 2-hydroxy-3-oxobutyl phosphate and 5-amino-6-(D-ribitylamino)uracil: step 1/2. In terms of biological role, catalyzes the formation of 6,7-dimethyl-8-ribityllumazine by condensation of 5-amino-6-(D-ribitylamino)uracil with 3,4-dihydroxy-2-butanone 4-phosphate. This is the penultimate step in the biosynthesis of riboflavin. The sequence is that of 6,7-dimethyl-8-ribityllumazine synthase from Stutzerimonas stutzeri (strain A1501) (Pseudomonas stutzeri).